The primary structure comprises 111 residues: Cornifelin homolog (111 aa).

The protein belongs to the cornifelin family.

The polypeptide is Cornifelin homolog (cnfn) (Xenopus tropicalis (Western clawed frog)).